We begin with the raw amino-acid sequence, 329 residues long: Phosphate acyltransferase (329 aa).

The protein belongs to the PlsX family. In terms of assembly, homodimer. Probably interacts with PlsY.

The protein resides in the cytoplasm. It carries out the reaction a fatty acyl-[ACP] + phosphate = an acyl phosphate + holo-[ACP]. Its pathway is lipid metabolism; phospholipid metabolism. In terms of biological role, catalyzes the reversible formation of acyl-phosphate (acyl-PO(4)) from acyl-[acyl-carrier-protein] (acyl-ACP). This enzyme utilizes acyl-ACP as fatty acyl donor, but not acyl-CoA. This chain is Phosphate acyltransferase, found in Exiguobacterium sp. (strain ATCC BAA-1283 / AT1b).